The following is a 109-amino-acid chain: uncharacterized protein (109 aa).

Residues 42–100 form the HTH cro/C1-type domain; it reads LEEKLKQEKIDRKYLAEVTNIPYTTVSRIMRAEANREFNPEIDTILKIAKYFNCTMDEV. The segment at residues 53-72 is a DNA-binding region (H-T-H motif); the sequence is RKYLAEVTNIPYTTVSRIMR.

This is an uncharacterized protein from Rickettsia conorii (strain ATCC VR-613 / Malish 7).